Consider the following 292-residue polypeptide: Nitrogenase iron protein (292 aa).

An ATP-binding site is contributed by 10–17 (GKGGIGKS). C98 lines the [4Fe-4S] cluster pocket. R101 carries the ADP-ribosylarginine; by dinitrogenase reductase ADP-ribosyltransferase modification. C133 lines the [4Fe-4S] cluster pocket.

The protein belongs to the NifH/BchL/ChlL family. Homodimer. [4Fe-4S] cluster is required as a cofactor. The reversible ADP-ribosylation of Arg-101 inactivates the nitrogenase reductase and regulates nitrogenase activity.

It catalyses the reaction N2 + 8 reduced [2Fe-2S]-[ferredoxin] + 16 ATP + 16 H2O = H2 + 8 oxidized [2Fe-2S]-[ferredoxin] + 2 NH4(+) + 16 ADP + 16 phosphate + 6 H(+). The key enzymatic reactions in nitrogen fixation are catalyzed by the nitrogenase complex, which has 2 components: the iron protein and the molybdenum-iron protein. The protein is Nitrogenase iron protein of Teredinibacter turnerae (strain ATCC 39867 / T7901).